The chain runs to 387 residues: Protein FAM153B (387 aa).

Disordered stretches follow at residues 233 to 256 (SYNG…RGDL) and 327 to 374 (TITG…KKSR). Residues 336 to 345 (SASPSSAPAE) are compositionally biased toward low complexity. Residues 347–359 (ATEKTKVEEEVKT) show a composition bias toward basic and acidic residues. Residues 360–374 (RKPKKKTRKPSKKSR) show a composition bias toward basic residues.

Belongs to the FAM153 family.

The polypeptide is Protein FAM153B (FAM153B) (Homo sapiens (Human)).